A 174-amino-acid polypeptide reads, in one-letter code: MAVEAEQCLFLGLDSVVDLHVSHVKNRLARFVGHSSVLCPSCHRHGYVSSCKGNSSLYWNGDPILLAVGDYCNMNFERVNLCIAILLRGCGLHVVNCSNNLSTSCLDLRSLILSSDLLHDLTYWNWLNRCREDVNLPISVVPGVAGLEVVEEVPLAVIATFRVRNRELPPLLLG.

This is an uncharacterized protein from Archaeoglobus fulgidus (strain ATCC 49558 / DSM 4304 / JCM 9628 / NBRC 100126 / VC-16).